The sequence spans 562 residues: Arginine--tRNA ligase (562 aa).

Positions 126 to 136 (ANPTGPLNVGH) match the 'HIGH' region motif.

The protein belongs to the class-I aminoacyl-tRNA synthetase family. Monomer.

It localises to the cytoplasm. It catalyses the reaction tRNA(Arg) + L-arginine + ATP = L-arginyl-tRNA(Arg) + AMP + diphosphate. The polypeptide is Arginine--tRNA ligase (Salinibacter ruber (strain DSM 13855 / M31)).